The primary structure comprises 397 residues: Phosphoglycerate kinase (397 aa).

Residues 25–27 (DLN), Arg41, 64–67 (HLGR), Arg118, and Arg151 each bind substrate. ATP-binding positions include Lys202, Glu324, and 350–353 (GGDT).

It belongs to the phosphoglycerate kinase family. In terms of assembly, monomer.

Its subcellular location is the cytoplasm. The catalysed reaction is (2R)-3-phosphoglycerate + ATP = (2R)-3-phospho-glyceroyl phosphate + ADP. It functions in the pathway carbohydrate degradation; glycolysis; pyruvate from D-glyceraldehyde 3-phosphate: step 2/5. The chain is Phosphoglycerate kinase from Herminiimonas arsenicoxydans.